Reading from the N-terminus, the 143-residue chain is MFLGTYTPKLDEKGRLTLPAKFRDALAGGLMVTKGQDHSLAVYPREEFTALARKAAAASRSDPEARAFVRGLAAGTDEQHADAQGRITLSADHRRYAGLSKDCVVIGSVDFLEIWDAQAWQTYVEANEENYSQATGVALGEIV.

SpoVT-AbrB domains are found at residues 5-47 (TYTP…PREE) and 76-119 (TDEQ…DAQA).

Belongs to the MraZ family. Forms oligomers.

The protein localises to the cytoplasm. It localises to the nucleoid. This chain is Transcriptional regulator MraZ, found in Rhodococcus jostii (strain RHA1).